The sequence spans 205 residues: Spermatogenesis-associated protein 24 (205 aa).

Positions 17-166 form a coiled coil; it reads LALDQLRDVI…QQKQIFRNHM (150 aa). A required for interaction with CBX5 and TBPL1 region spans residues 138–185; that stretch reads EDILNGKENEIKELQQVISQQKQIFRNHMSDFRIQKQQESYMAQVLDQ. A disordered region spans residues 180-205; the sequence is AQVLDQKHKKASGTRQARSHQHPREK. Residues 186–205 are compositionally biased toward basic residues; it reads KHKKASGTRQARSHQHPREK.

Belongs to the SPATA24 family. As to quaternary structure, homodimer. Interacts with CBX3, CBX5, GMNN, GTF2B, TBPL1 and the polycomb proteins PHCF2, RNF2 and SCMH1 but not with CBX1 or PCGF2.

It is found in the cytoplasm. Its subcellular location is the nucleus. The protein localises to the nucleolus. It localises to the nucleoplasm. Binds DNA with high affinity but does not bind to TATA boxes. Synergises with GMNN and TBP in activation of TATA box-containing promoters and with GMNN and TBPL1 in activation of the NF1 TATA-less promoter. May play a role in cytoplasm movement and removal during spermiogenesis. The sequence is that of Spermatogenesis-associated protein 24 (SPATA24) from Homo sapiens (Human).